The primary structure comprises 520 residues: Ubiquitin carboxyl-terminal hydrolase MINDY-1 (520 aa).

The tract at residues methionine 1–methionine 155 is disordered. Positions lysine 26–lysine 37 are enriched in basic and acidic residues. A compositionally biased stretch (polar residues) spans threonine 43–lysine 54. Positions alanine 77 to lysine 86 are enriched in low complexity. Composition is skewed to polar residues over residues valine 93–methionine 112 and serine 132–glutamate 146. The active-site Nucleophile is cysteine 189. The Proton acceptor role is filled by histidine 371. Disordered stretches follow at residues serine 422 to glutamine 441 and glutamate 467 to leucine 520. The ubiquitin-binding domain (UBD) stretch occupies residues glutamine 441–glutamine 479. Residues alanine 469 to glutamine 498 show a composition bias toward low complexity. Residues lysine 511–leucine 520 show a composition bias toward basic and acidic residues.

Belongs to the MINDY deubiquitinase family. FAM63 subfamily.

The catalysed reaction is Thiol-dependent hydrolysis of ester, thioester, amide, peptide and isopeptide bonds formed by the C-terminal Gly of ubiquitin (a 76-residue protein attached to proteins as an intracellular targeting signal).. Its function is as follows. Hydrolase that can specifically remove 'Lys-48'-linked conjugated ubiquitin from proteins. May play a regulatory role at the level of protein turnover. This Danio rerio (Zebrafish) protein is Ubiquitin carboxyl-terminal hydrolase MINDY-1 (mindy1).